The primary structure comprises 210 residues: Thymidylate kinase (210 aa).

Residue 10-17 coordinates ATP; it reads GPEGAGKS.

It belongs to the thymidylate kinase family.

It catalyses the reaction dTMP + ATP = dTDP + ADP. Its function is as follows. Phosphorylation of dTMP to form dTDP in both de novo and salvage pathways of dTTP synthesis. In Pseudomonas syringae pv. syringae (strain B728a), this protein is Thymidylate kinase.